The chain runs to 224 residues: Cytidylate kinase (224 aa).

10 to 18 lines the ATP pocket; it reads GPASAGKST.

The protein belongs to the cytidylate kinase family. Type 1 subfamily.

Its subcellular location is the cytoplasm. It carries out the reaction CMP + ATP = CDP + ADP. The enzyme catalyses dCMP + ATP = dCDP + ADP. In Leuconostoc mesenteroides subsp. mesenteroides (strain ATCC 8293 / DSM 20343 / BCRC 11652 / CCM 1803 / JCM 6124 / NCDO 523 / NBRC 100496 / NCIMB 8023 / NCTC 12954 / NRRL B-1118 / 37Y), this protein is Cytidylate kinase.